The following is a 206-amino-acid chain: Large ribosomal subunit protein uL4 (206 aa).

The segment covering 66 to 77 has biased composition (basic residues); sequence QKGTGRARHHSA. A disordered region spans residues 66-96; sequence QKGTGRARHHSARAPQFRGGGQAHGPVVRSH.

The protein belongs to the universal ribosomal protein uL4 family. In terms of assembly, part of the 50S ribosomal subunit.

Functionally, one of the primary rRNA binding proteins, this protein initially binds near the 5'-end of the 23S rRNA. It is important during the early stages of 50S assembly. It makes multiple contacts with different domains of the 23S rRNA in the assembled 50S subunit and ribosome. In terms of biological role, forms part of the polypeptide exit tunnel. The polypeptide is Large ribosomal subunit protein uL4 (Brucella anthropi (strain ATCC 49188 / DSM 6882 / CCUG 24695 / JCM 21032 / LMG 3331 / NBRC 15819 / NCTC 12168 / Alc 37) (Ochrobactrum anthropi)).